The chain runs to 258 residues: Imidazole glycerol phosphate synthase subunit HisF (258 aa).

Active-site residues include Asp11 and Asp130.

It belongs to the HisA/HisF family. As to quaternary structure, heterodimer of HisH and HisF.

It is found in the cytoplasm. The enzyme catalyses 5-[(5-phospho-1-deoxy-D-ribulos-1-ylimino)methylamino]-1-(5-phospho-beta-D-ribosyl)imidazole-4-carboxamide + L-glutamine = D-erythro-1-(imidazol-4-yl)glycerol 3-phosphate + 5-amino-1-(5-phospho-beta-D-ribosyl)imidazole-4-carboxamide + L-glutamate + H(+). It participates in amino-acid biosynthesis; L-histidine biosynthesis; L-histidine from 5-phospho-alpha-D-ribose 1-diphosphate: step 5/9. IGPS catalyzes the conversion of PRFAR and glutamine to IGP, AICAR and glutamate. The HisF subunit catalyzes the cyclization activity that produces IGP and AICAR from PRFAR using the ammonia provided by the HisH subunit. This chain is Imidazole glycerol phosphate synthase subunit HisF, found in Photorhabdus laumondii subsp. laumondii (strain DSM 15139 / CIP 105565 / TT01) (Photorhabdus luminescens subsp. laumondii).